A 406-amino-acid polypeptide reads, in one-letter code: Glutamyl-tRNA reductase (406 aa).

Substrate contacts are provided by residues 49 to 52 (TCHR), Ser107, 112 to 114 (EPQ), and Gln118. Cys50 acts as the Nucleophile in catalysis. An NADP(+)-binding site is contributed by 187–192 (GAGETG).

Belongs to the glutamyl-tRNA reductase family. Homodimer.

It catalyses the reaction (S)-4-amino-5-oxopentanoate + tRNA(Glu) + NADP(+) = L-glutamyl-tRNA(Glu) + NADPH + H(+). It participates in porphyrin-containing compound metabolism; protoporphyrin-IX biosynthesis; 5-aminolevulinate from L-glutamyl-tRNA(Glu): step 1/2. Catalyzes the NADPH-dependent reduction of glutamyl-tRNA(Glu) to glutamate 1-semialdehyde (GSA). This Thermomicrobium roseum (strain ATCC 27502 / DSM 5159 / P-2) protein is Glutamyl-tRNA reductase.